Reading from the N-terminus, the 985-residue chain is Rho guanine nucleotide exchange factor 2 (985 aa).

Residues methionine 1–lysine 32 form a disordered region. The segment at glycine 39–cysteine 86 adopts a Phorbol-ester/DAG-type zinc-finger fold. Serine 109, serine 122, serine 129, serine 133, and serine 137 each carry phosphoserine. The interval arginine 131–aspartate 161 is interaction with DYNLT1. The residue at position 143 (serine 143) is a Phosphoserine; by PAK4. Phosphoserine occurs at positions 151, 163, 172, 174, and 177. The DH domain occupies lysine 236–aspartate 433. The residue at position 354 (lysine 354) is an N6-acetyllysine. One can recognise a PH domain in the interval lysine 473 to arginine 572. Positions leucine 591–methionine 619 form a coiled coil. Residues serine 646 and serine 649 each carry the phosphoserine modification. At threonine 680 the chain carries Phosphothreonine; by MAPK1 or MAPK3. Phosphoserine occurs at positions 692, 710, and 781. Threonine 795 carries the post-translational modification Phosphothreonine. Residues glutamate 797 to glutamate 866 are a coiled coil. Serine 885 carries the phosphoserine modification. Disordered regions lie at residues aspartate 890–aspartate 909 and histidine 918–serine 985. The residue at position 893 (tyrosine 893) is a Phosphotyrosine. A Phosphoserine; by PAK4 modification is found at serine 895. Positions arginine 919–aspartate 938 are enriched in basic and acidic residues. Phosphoserine is present on residues serine 931, serine 939, and serine 940. Residues serine 940–glutamate 949 are compositionally biased toward acidic residues. Threonine 944 is modified (phosphothreonine). 5 positions are modified to phosphoserine: serine 946, serine 951, serine 952, serine 955, and serine 959.

As to quaternary structure, found in a complex composed at least of ARHGEF2, NOD2 and RIPK2. Interacts with RIPK2; the interaction mediates tyrosine phosphorylation of RIPK2 by Src kinase CSK. Interacts with RIPK1 and RIPK3. Interacts with YWHAZ/14-3-3 zeta; when phosphorylated at Ser-885. Interacts with the kinases PAK4, AURKA and MAPK1. Interacts with RHOA and RAC1. Interacts with NOD1. Interacts (via the N- terminal zinc finger) with CAPN6 (via domain II). Interacts with DYNLT1. In terms of processing, phosphorylation of Ser-885 by PAK1 induces binding to protein YWHAZ, promoting its relocation to microtubules and the inhibition of its activity. Phosphorylated by AURKA and CDK1 during mitosis, which negatively regulates its activity. Phosphorylation by MAPK1 or MAPK3 increases nucleotide exchange activity. Phosphorylation by PAK4 releases GEF-H1 from the microtubules. Phosphorylated on serine, threonine and tyrosine residues in a RIPK2-dependent manner. In terms of tissue distribution, ubiquitous, with the exception of liver tissue. Levels are high in hemopoietic tissues (thymus, spleen, bone marrow) as well as in kidney and lung. Expressed in the germinal zones of both the neocortex and the cerebellum and in the pontine gray nuclei.

It is found in the cytoplasm. Its subcellular location is the cytoskeleton. The protein localises to the cell junction. The protein resides in the tight junction. It localises to the golgi apparatus. It is found in the spindle. Its subcellular location is the cytoplasmic vesicle. In terms of biological role, activates Rho-GTPases by promoting the exchange of GDP for GTP. May be involved in epithelial barrier permeability, cell motility and polarization, dendritic spine morphology, antigen presentation, leukemic cell differentiation, cell cycle regulation, innate immune response, and cancer. Binds Rac-GTPases, but does not seem to promote nucleotide exchange activity toward Rac-GTPases. May stimulate instead the cortical activity of Rac. Inactive toward CDC42, TC10, or Ras-GTPases. Forms an intracellular sensing system along with NOD1 for the detection of microbial effectors during cell invasion by pathogens. Involved in innate immune signaling transduction pathway promoting cytokine IL6/interleukin-6 and TNF-alpha secretion in macrophage upon stimulation by bacterial peptidoglycans; acts as a signaling intermediate between NOD2 receptor and RIPK2 kinase. Contributes to the tyrosine phosphorylation of RIPK2 through Src tyrosine kinase leading to NF-kappaB activation by NOD2. Overexpression activates Rho-, but not Rac-GTPases, and increases paracellular permeability. Involved in neuronal progenitor cell division and differentiation. Involved in the migration of precerebellar neurons. The protein is Rho guanine nucleotide exchange factor 2 (Arhgef2) of Mus musculus (Mouse).